Reading from the N-terminus, the 213-residue chain is Validoxylamine A 7'-phosphate phosphatase (213 aa).

The active-site Nucleophile is the aspartate 8. A divalent metal cation-binding residues include aspartate 8 and aspartate 10. Residues aspartate 8–aspartate 10, threonine 107–serine 108, and lysine 140 each bind substrate. Aspartate 10 functions as the Proton donor in the catalytic mechanism. Residue aspartate 165 coordinates a divalent metal cation.

It belongs to the HAD-like hydrolase superfamily. CbbY/CbbZ/Gph/YieH family. Requires Mg(2+) as cofactor. The cofactor is Mn(2+). Co(2+) serves as cofactor.

It catalyses the reaction validoxylamine A 7'-phosphate + H2O = validoxylamine A + phosphate. Functionally, involved in the biosynthesis of the antifungal agent validamycin A. Catalyzes the dephosphorylation of validoxylamine A 7'-phosphate to yield validoxylamine A. VldH is also able to convert trehalose 6-phosphate to trehalose. The sequence is that of Validoxylamine A 7'-phosphate phosphatase from Streptomyces hygroscopicus subsp. limoneus.